The sequence spans 330 residues: Ketol-acid reductoisomerase (NADP(+)) (330 aa).

Residues 1–181 (MNAYYEQDAD…GGTKAGVIET (181 aa)) form the KARI N-terminal Rossmann domain. NADP(+) contacts are provided by residues 24–27 (YGSQ), Arg-47, Ser-50, Ser-52, and 82–85 (DQYQ). Residue His-107 is part of the active site. An NADP(+)-binding site is contributed by Gly-133. One can recognise a KARI C-terminal knotted domain in the interval 182 to 327 (TFKNETETDL…SKLRDMMSWL (146 aa)). Positions 190, 194, 226, and 230 each coordinate Mg(2+). Position 251 (Ser-251) interacts with substrate.

Belongs to the ketol-acid reductoisomerase family. Requires Mg(2+) as cofactor.

The enzyme catalyses (2R)-2,3-dihydroxy-3-methylbutanoate + NADP(+) = (2S)-2-acetolactate + NADPH + H(+). It carries out the reaction (2R,3R)-2,3-dihydroxy-3-methylpentanoate + NADP(+) = (S)-2-ethyl-2-hydroxy-3-oxobutanoate + NADPH + H(+). Its pathway is amino-acid biosynthesis; L-isoleucine biosynthesis; L-isoleucine from 2-oxobutanoate: step 2/4. It functions in the pathway amino-acid biosynthesis; L-valine biosynthesis; L-valine from pyruvate: step 2/4. In terms of biological role, involved in the biosynthesis of branched-chain amino acids (BCAA). Catalyzes an alkyl-migration followed by a ketol-acid reduction of (S)-2-acetolactate (S2AL) to yield (R)-2,3-dihydroxy-isovalerate. In the isomerase reaction, S2AL is rearranged via a Mg-dependent methyl migration to produce 3-hydroxy-3-methyl-2-ketobutyrate (HMKB). In the reductase reaction, this 2-ketoacid undergoes a metal-dependent reduction by NADPH to yield (R)-2,3-dihydroxy-isovalerate. The polypeptide is Ketol-acid reductoisomerase (NADP(+)) (Chlorobium limicola (strain DSM 245 / NBRC 103803 / 6330)).